A 423-amino-acid polypeptide reads, in one-letter code: MDNHNSSHQLYKKAMALVLAGGRGSRLYNLTDTRAKPAVYFGGKFRIIDFALSNCLNSGIRRIGVVTQYKSHSLLRHLQRGWGFLRGELNEFIDLLPAQQRVDEEHWYRGTADAVYQNIDILRSYGPEYVIVLAGDHIYKMDYSIMLRDHAQSGYKCTVGCVEIAKGEAYAFGIMGIDENRKITSFIEKPKKNAPTIPGTTDRCYASMGIYIFNSDYLYDLLEEDITNKESSHDFGKDIIPRVVSENQALAHPFSMSCVPRGEGIEPYWRDVGTIDAFWEANLDLAANMPELNIYDKDWPVWTAQEQLPPAKFVPDRNGNHGVITNTLASGGCIVLGSEISKSLMFSKVRVLAGCKIDQCVIMPEVVVGENCRLKKVVIDKGCDIPAGMVIGEDPIEDAKNFYRTDKGVVLVTKKMIDELKEK.

Alpha-D-glucose 1-phosphate contacts are provided by residues Tyr-108, Gly-173, 188–189, and Ser-207; that span reads EK.

It belongs to the bacterial/plant glucose-1-phosphate adenylyltransferase family. As to quaternary structure, homotetramer.

The enzyme catalyses alpha-D-glucose 1-phosphate + ATP + H(+) = ADP-alpha-D-glucose + diphosphate. Its pathway is glycan biosynthesis; glycogen biosynthesis. Involved in the biosynthesis of ADP-glucose, a building block required for the elongation reactions to produce glycogen. Catalyzes the reaction between ATP and alpha-D-glucose 1-phosphate (G1P) to produce pyrophosphate and ADP-Glc. The protein is Glucose-1-phosphate adenylyltransferase of Francisella tularensis subsp. mediasiatica (strain FSC147).